Here is a 92-residue protein sequence, read N- to C-terminus: Small ribosomal subunit protein uS19 (92 aa).

Belongs to the universal ribosomal protein uS19 family.

In terms of biological role, protein S19 forms a complex with S13 that binds strongly to the 16S ribosomal RNA. The chain is Small ribosomal subunit protein uS19 from Aeromonas hydrophila subsp. hydrophila (strain ATCC 7966 / DSM 30187 / BCRC 13018 / CCUG 14551 / JCM 1027 / KCTC 2358 / NCIMB 9240 / NCTC 8049).